We begin with the raw amino-acid sequence, 296 residues long: N-acetylmuramic acid 6-phosphate etherase 2 (296 aa).

One can recognise an SIS domain in the interval 55–218; sequence IIKSFNQGGR…STISMIGIGK (164 aa). The Proton donor role is filled by glutamate 83. Glutamate 114 is a catalytic residue.

This sequence belongs to the GCKR-like family. MurNAc-6-P etherase subfamily. As to quaternary structure, homodimer.

The enzyme catalyses N-acetyl-D-muramate 6-phosphate + H2O = N-acetyl-D-glucosamine 6-phosphate + (R)-lactate. It participates in amino-sugar metabolism; N-acetylmuramate degradation. Its function is as follows. Specifically catalyzes the cleavage of the D-lactyl ether substituent of MurNAc 6-phosphate, producing GlcNAc 6-phosphate and D-lactate. The polypeptide is N-acetylmuramic acid 6-phosphate etherase 2 (Enterococcus faecalis (strain ATCC 700802 / V583)).